A 285-amino-acid polypeptide reads, in one-letter code: MIHKQQLQAYLQLTRIDRPIGIYLVLWPALWALWLAADGMPPMSILIIFILGAVIMRSAGCVINDYADRHFDGYVTRTCARPLATGQLTERQALKFFFVLCLLAFGLVLFLNPFTILLSLGAVGLAILYPFMKRHTFWPQAFLGAAFAWAIPMAFAAIQNQVPWQAWVIFGVTLVWALVYDTAYAVADKEDDVKLGIKSTAILFGDRVQEIIGFFQAIMLLGFLWIGDLFGLSWLYYGSVLIAAGFFVYHQYLLSFDQPQKAFKAFLNNHWVGLVILIGIMLDTL.

The next 7 membrane-spanning stretches (helical) occupy residues isoleucine 20–alanine 37, phenylalanine 96–isoleucine 116, tryptophan 138–isoleucine 158, alanine 166–valine 186, isoleucine 211–glycine 231, tryptophan 234–leucine 254, and alanine 262–leucine 282.

This sequence belongs to the UbiA prenyltransferase family. Mg(2+) serves as cofactor.

Its subcellular location is the cell inner membrane. It carries out the reaction all-trans-octaprenyl diphosphate + 4-hydroxybenzoate = 4-hydroxy-3-(all-trans-octaprenyl)benzoate + diphosphate. It functions in the pathway cofactor biosynthesis; ubiquinone biosynthesis. Functionally, catalyzes the prenylation of para-hydroxybenzoate (PHB) with an all-trans polyprenyl group. Mediates the second step in the final reaction sequence of ubiquinone-8 (UQ-8) biosynthesis, which is the condensation of the polyisoprenoid side chain with PHB, generating the first membrane-bound Q intermediate 3-octaprenyl-4-hydroxybenzoate. This Hydrogenovibrio crunogenus (strain DSM 25203 / XCL-2) (Thiomicrospira crunogena) protein is 4-hydroxybenzoate octaprenyltransferase.